The primary structure comprises 450 residues: Bifunctional protein GlmU (450 aa).

A pyrophosphorylase region spans residues 1 to 229 (MGVALIVLAA…EAETLGINTR (229 aa)). Residues 8 to 11 (LAAG), lysine 22, glutamine 75, 80 to 81 (GT), 103 to 105 (YGD), glycine 141, glutamate 155, asparagine 170, and asparagine 227 contribute to the UDP-N-acetyl-alpha-D-glucosamine site. Aspartate 105 serves as a coordination point for Mg(2+). Asparagine 227 is a binding site for Mg(2+). The segment at 230–250 (TELAAAEQAFQARARARALED) is linker. Positions 251-450 (GVTLADPATT…RARKSAKGAQ (200 aa)) are N-acetyltransferase. UDP-N-acetyl-alpha-D-glucosamine contacts are provided by arginine 316 and lysine 334. The active-site Proton acceptor is histidine 346. UDP-N-acetyl-alpha-D-glucosamine is bound by residues tyrosine 349 and asparagine 360. Acetyl-CoA is bound by residues alanine 363, 369–370 (NY), serine 388, threonine 406, and arginine 423.

The protein in the N-terminal section; belongs to the N-acetylglucosamine-1-phosphate uridyltransferase family. In the C-terminal section; belongs to the transferase hexapeptide repeat family. As to quaternary structure, homotrimer. It depends on Mg(2+) as a cofactor.

The protein resides in the cytoplasm. It carries out the reaction alpha-D-glucosamine 1-phosphate + acetyl-CoA = N-acetyl-alpha-D-glucosamine 1-phosphate + CoA + H(+). It catalyses the reaction N-acetyl-alpha-D-glucosamine 1-phosphate + UTP + H(+) = UDP-N-acetyl-alpha-D-glucosamine + diphosphate. It functions in the pathway nucleotide-sugar biosynthesis; UDP-N-acetyl-alpha-D-glucosamine biosynthesis; N-acetyl-alpha-D-glucosamine 1-phosphate from alpha-D-glucosamine 6-phosphate (route II): step 2/2. The protein operates within nucleotide-sugar biosynthesis; UDP-N-acetyl-alpha-D-glucosamine biosynthesis; UDP-N-acetyl-alpha-D-glucosamine from N-acetyl-alpha-D-glucosamine 1-phosphate: step 1/1. Its pathway is bacterial outer membrane biogenesis; LPS lipid A biosynthesis. Its function is as follows. Catalyzes the last two sequential reactions in the de novo biosynthetic pathway for UDP-N-acetylglucosamine (UDP-GlcNAc). The C-terminal domain catalyzes the transfer of acetyl group from acetyl coenzyme A to glucosamine-1-phosphate (GlcN-1-P) to produce N-acetylglucosamine-1-phosphate (GlcNAc-1-P), which is converted into UDP-GlcNAc by the transfer of uridine 5-monophosphate (from uridine 5-triphosphate), a reaction catalyzed by the N-terminal domain. The chain is Bifunctional protein GlmU from Dinoroseobacter shibae (strain DSM 16493 / NCIMB 14021 / DFL 12).